The following is a 425-amino-acid chain: Transmembrane protein 184A (425 aa).

Transmembrane regions (helical) follow at residues 51-71 (LFLT…TALL), 96-116 (LLFI…LLGG), 133-153 (FVIY…SAIM), 189-209 (TLQF…LQAF), 226-246 (VTLV…LFYF), 261-281 (FLTI…LAIL), and 303-323 (LAAG…SLAL). The tract at residues 375 to 425 (QYTQQSTHEAPGPGQGGHPSPSTHPGPASGSGGGKKSRNIEKRMLIPSEDL) is disordered. Over residues 392-402 (HPSPSTHPGPA) the composition is skewed to low complexity.

This sequence belongs to the TMEM184 family. As to expression, expressed in vascular cells (at protein level).

The protein resides in the cell membrane. Its subcellular location is the cytoplasm. It is found in the perinuclear region. The protein localises to the early endosome membrane. It localises to the endosome. The protein resides in the cytoplasmic vesicle. Its subcellular location is the secretory vesicle membrane. It is found in the cytoplasmic vesicle membrane. Its function is as follows. Acts as a heparin receptor in vascular cells. May be involved in vesicle transport in exocrine cells and Sertoli cells. The protein is Transmembrane protein 184A (Tmem184a) of Rattus norvegicus (Rat).